Consider the following 660-residue polypeptide: Threonine--tRNA ligase (660 aa).

The TGS domain occupies 1 to 64 (MSHSVSLTFP…TEGRIEIVTR (64 aa)). The interval 245–547 (DHRRLGREMD…LLENFAGHMP (303 aa)) is catalytic. Residues C341, H392, and H524 each coordinate Zn(2+).

Belongs to the class-II aminoacyl-tRNA synthetase family. In terms of assembly, homodimer. Requires Zn(2+) as cofactor.

It is found in the cytoplasm. It catalyses the reaction tRNA(Thr) + L-threonine + ATP = L-threonyl-tRNA(Thr) + AMP + diphosphate + H(+). In terms of biological role, catalyzes the attachment of threonine to tRNA(Thr) in a two-step reaction: L-threonine is first activated by ATP to form Thr-AMP and then transferred to the acceptor end of tRNA(Thr). Also edits incorrectly charged L-seryl-tRNA(Thr). The sequence is that of Threonine--tRNA ligase from Sinorhizobium medicae (strain WSM419) (Ensifer medicae).